We begin with the raw amino-acid sequence, 340 residues long: TD and POZ domain-containing protein 5 (340 aa).

The MATH domain maps to 19 to 149 (EFCYVWTIRN…ENKLTLCCKV (131 aa)). One can recognise a BTB domain in the interval 188–255 (TDCCLLVAGH…IYTGKAPHLQ (68 aa)).

The protein belongs to the Tdpoz family.

This Mus musculus (Mouse) protein is TD and POZ domain-containing protein 5.